A 436-amino-acid polypeptide reads, in one-letter code: Xylose isomerase (436 aa).

Residues His-100 and Asp-103 contribute to the active site. The Mg(2+) site is built by Glu-231, Glu-267, His-270, Asp-295, Asp-306, Asp-308, and Asp-338.

The protein belongs to the xylose isomerase family. In terms of assembly, homotetramer. It depends on Mg(2+) as a cofactor.

The protein resides in the cytoplasm. It catalyses the reaction alpha-D-xylose = alpha-D-xylulofuranose. This Rhizobium etli (strain ATCC 51251 / DSM 11541 / JCM 21823 / NBRC 15573 / CFN 42) protein is Xylose isomerase.